Reading from the N-terminus, the 71-residue chain is DNA-directed RNA polymerases II, IV and V subunit 10 (71 aa).

Positions 7, 10, 44, and 45 each coordinate Zn(2+).

The protein belongs to the archaeal Rpo10/eukaryotic RPB10 RNA polymerase subunit family. As to quaternary structure, component of the RNA polymerase II, IV and V complexes. Interacts with NRPD1.

The protein localises to the nucleus. Functionally, DNA-dependent RNA polymerase catalyzes the transcription of DNA into RNA using the four ribonucleoside triphosphates as substrates. Component of RNA polymerase II which synthesizes mRNA precursors and many functional non-coding RNAs. Pol II is the central component of the basal RNA polymerase II transcription machinery. It is composed of mobile elements that move relative to each other. Component of RNA polymerases IV and V which mediate short-interfering RNAs (siRNA) accumulation and subsequent RNA-directed DNA methylation-dependent (RdDM) transcriptional gene silencing (TGS) of endogenous repeated sequences, including transposable elements. The chain is DNA-directed RNA polymerases II, IV and V subunit 10 (NRPB10) from Arabidopsis thaliana (Mouse-ear cress).